Reading from the N-terminus, the 569-residue chain is Putative potassium-transporting ATPase ATP-binding subunit (569 aa).

A run of 2 helical transmembrane segments spans residues 34 to 54 (PVMFVVWAGSVLATLLTLAMV) and 58 to 78 (IAGSALFTGVISLWLWFTVLF). Aspartate 194 functions as the 4-aspartylphosphate intermediate in the catalytic mechanism. Residues aspartate 231, glutamate 235, 264–271 (FTAQSRMS), and lysine 282 contribute to the ATP site. Residues aspartate 405 and aspartate 409 each coordinate Mg(2+). A run of 3 helical transmembrane segments spans residues 475–495 (FAIIPAAFAATYPQLNALNVM), 503–523 (AILSAVIFNALIIIFLIPLAL), and 543–563 (IYGLGGLVVPFIGIKVIDVLL).

Belongs to the cation transport ATPase (P-type) (TC 3.A.3) family. Type IA subfamily. In terms of assembly, the system is composed of three essential subunits: KdpA, KdpB and KdpC.

It localises to the cell inner membrane. It catalyses the reaction K(+)(out) + ATP + H2O = K(+)(in) + ADP + phosphate + H(+). Its function is as follows. Part of the high-affinity ATP-driven potassium transport (or Kdp) system, which catalyzes the hydrolysis of ATP coupled with the electrogenic transport of potassium into the cytoplasm. This subunit is responsible for energy coupling to the transport system and for the release of the potassium ions to the cytoplasm. In Salmonella typhi, this protein is Putative potassium-transporting ATPase ATP-binding subunit.